A 96-amino-acid chain; its full sequence is Protein RnfH (96 aa).

Belongs to the UPF0125 (RnfH) family.

This Escherichia coli O127:H6 (strain E2348/69 / EPEC) protein is Protein RnfH.